We begin with the raw amino-acid sequence, 749 residues long: G-type lectin S-receptor-like serine/threonine-protein kinase At1g61460 (749 aa).

A signal peptide spans 1 to 25; sequence MRITFFASLLLFTNTIFISFSFAIA. The 120-residue stretch at 26–145 folds into the Bulb-type lectin domain; the sequence is GINKESPLSI…FSGRTLWQSF (120 aa). The Extracellular portion of the chain corresponds to 26 to 392; the sequence is GINKESPLSI…ELGGNKRKKT (367 aa). N-linked (GlcNAc...) asparagine glycans are attached at residues asparagine 54, asparagine 95, asparagine 118, and asparagine 135. One can recognise an EGF-like; atypical domain in the interval 247–280; sequence PAHSCDYYGVCGPFGICVKSVCKCFKGFIPKYIE. Cystine bridges form between cysteine 251–cysteine 263 and cysteine 257–cysteine 268. N-linked (GlcNAc...) asparagine glycosylation is found at asparagine 286, asparagine 302, and asparagine 341. A PAN domain is found at 299-381; it reads CQENSTKKDA…GEILSIRLAR (83 aa). 2 disulfide bridges follow: cysteine 334–cysteine 355 and cysteine 338–cysteine 344. A helical membrane pass occupies residues 393 to 413; the sequence is ITASIVSLSLFLILGSTAFGF. At 414–749 the chain is on the cytoplasmic side; sequence WRYRVKHNAS…EMTKSVILGR (336 aa). Residues 454–721 enclose the Protein kinase domain; sequence FSLSNKLGQG…DLPSPKQPTF (268 aa). ATP is bound by residues 460-468 and lysine 482; that span reads LGQGGFGSV. The tract at residues 543–560 is caM-binding; it reads RKRLEIDWPKRFDIIQGI. Aspartate 579 acts as the Proton acceptor in catalysis.

The protein belongs to the protein kinase superfamily. Ser/Thr protein kinase family.

It is found in the cell membrane. It catalyses the reaction L-seryl-[protein] + ATP = O-phospho-L-seryl-[protein] + ADP + H(+). It carries out the reaction L-threonyl-[protein] + ATP = O-phospho-L-threonyl-[protein] + ADP + H(+). In Arabidopsis thaliana (Mouse-ear cress), this protein is G-type lectin S-receptor-like serine/threonine-protein kinase At1g61460.